A 186-amino-acid polypeptide reads, in one-letter code: Putative 5'(3')-deoxyribonucleotidase (186 aa).

The protein belongs to the 5'(3')-deoxyribonucleotidase family. The cofactor is Mg(2+).

Functionally, dephosphorylates the 5' and 2'(3')-phosphates of deoxyribonucleotides. The chain is Putative 5'(3')-deoxyribonucleotidase from Bordetella parapertussis (strain 12822 / ATCC BAA-587 / NCTC 13253).